A 245-amino-acid polypeptide reads, in one-letter code: tRNA1(Val) (adenine(37)-N6)-methyltransferase (245 aa).

It belongs to the methyltransferase superfamily. tRNA (adenine-N(6)-)-methyltransferase family.

The protein resides in the cytoplasm. It carries out the reaction adenosine(37) in tRNA1(Val) + S-adenosyl-L-methionine = N(6)-methyladenosine(37) in tRNA1(Val) + S-adenosyl-L-homocysteine + H(+). In terms of biological role, specifically methylates the adenine in position 37 of tRNA(1)(Val) (anticodon cmo5UAC). This Escherichia coli O157:H7 protein is tRNA1(Val) (adenine(37)-N6)-methyltransferase.